The sequence spans 151 residues: 3-hydroxyacyl-[acyl-carrier-protein] dehydratase FabZ (151 aa).

Histidine 58 is a catalytic residue.

This sequence belongs to the thioester dehydratase family. FabZ subfamily.

The protein localises to the cytoplasm. It carries out the reaction a (3R)-hydroxyacyl-[ACP] = a (2E)-enoyl-[ACP] + H2O. Its function is as follows. Involved in unsaturated fatty acids biosynthesis. Catalyzes the dehydration of short chain beta-hydroxyacyl-ACPs and long chain saturated and unsaturated beta-hydroxyacyl-ACPs. The chain is 3-hydroxyacyl-[acyl-carrier-protein] dehydratase FabZ from Histophilus somni (strain 129Pt) (Haemophilus somnus).